The sequence spans 399 residues: CCA-adding enzyme (399 aa).

2 residues coordinate ATP: Gly32 and Arg35. 2 residues coordinate CTP: Gly32 and Arg35. Positions 45 and 47 each coordinate Mg(2+). Residues Arg116, Asp159, Arg162, Arg165, and Arg168 each contribute to the ATP site. The CTP site is built by Arg116, Asp159, Arg162, Arg165, and Arg168.

It belongs to the tRNA nucleotidyltransferase/poly(A) polymerase family. Bacterial CCA-adding enzyme type 3 subfamily. As to quaternary structure, homodimer. It depends on Mg(2+) as a cofactor.

It carries out the reaction a tRNA precursor + 2 CTP + ATP = a tRNA with a 3' CCA end + 3 diphosphate. The enzyme catalyses a tRNA with a 3' CCA end + 2 CTP + ATP = a tRNA with a 3' CCACCA end + 3 diphosphate. In terms of biological role, catalyzes the addition and repair of the essential 3'-terminal CCA sequence in tRNAs without using a nucleic acid template. Adds these three nucleotides in the order of C, C, and A to the tRNA nucleotide-73, using CTP and ATP as substrates and producing inorganic pyrophosphate. tRNA 3'-terminal CCA addition is required both for tRNA processing and repair. Also involved in tRNA surveillance by mediating tandem CCA addition to generate a CCACCA at the 3' terminus of unstable tRNAs. While stable tRNAs receive only 3'-terminal CCA, unstable tRNAs are marked with CCACCA and rapidly degraded. The sequence is that of CCA-adding enzyme from Streptococcus pneumoniae serotype 4 (strain ATCC BAA-334 / TIGR4).